The sequence spans 368 residues: Probable ubiquitin receptor RAD23a (368 aa).

The Ubiquitin-like domain occupies 1 to 77 (MKLTVKTLKG…GFLVVMLSKS (77 aa)). Positions 80–111 (ASSAGPSSTQPTSTTTSTISSTTLAAPSTTQS) are enriched in low complexity. The interval 80-136 (ASSAGPSSTQPTSTTTSTISSTTLAAPSTTQSIAVPASNSTPVQEQPTAQSDTYGQA) is disordered. A compositionally biased stretch (polar residues) spans 116–136 (ASNSTPVQEQPTAQSDTYGQA). One can recognise a UBA 1 domain in the interval 142–185 (SGSSIEQMVQQIMEMGGGSWDKETVTRALRAAYNNPERAVDYLY). The segment at 202 to 222 (VGSGRELTAPPPSGGPNSSPL) is disordered. The region spanning 239–282 (GTLEFLRGNDQFQQLRSMVNSNPQILQPMLQELGKQNPQLLRLI) is the STI1 domain. The UBA 2 domain maps to 320 to 360 (VTPEEQESIERLEAMGFDRAIVIEAFLSCDRNEELAANYLL).

The protein belongs to the RAD23 family. In terms of assembly, interacts with 'Lys-48'-linked polyubiquitin chains. Interacts with RPN10. Widely expressed in the whole plant.

Its subcellular location is the nucleus. The protein resides in the cytoplasm. In terms of biological role, may be involved in nucleotide excision repair. Binds and presumably selects ubiquitin-conjugates for destruction. Prefers multiubiquitin chains rather than single ubiquitins, with a binding affinity for 'Lys-48'-linked ubiquitin chains. Acts as a ubiquitin receptor that associates with the 26S proteasomal docking subunit RPN10 for the indirect recognition of ubiquitinated substrates of ubiquitin/26S proteasome-mediated proteolysis (UPP). Involved in UV tolerance in roots, specifically in dark conditions. This Arabidopsis thaliana (Mouse-ear cress) protein is Probable ubiquitin receptor RAD23a.